Consider the following 358-residue polypeptide: Phosphoserine aminotransferase (358 aa).

Position 41 (arginine 41) interacts with L-glutamate. Pyridoxal 5'-phosphate is bound by residues alanine 75–serine 76, tryptophan 100, threonine 148, aspartate 167, and glutamine 190. Position 191 is an N6-(pyridoxal phosphate)lysine (lysine 191). Asparagine 233 to threonine 234 is a pyridoxal 5'-phosphate binding site.

It belongs to the class-V pyridoxal-phosphate-dependent aminotransferase family. SerC subfamily. In terms of assembly, homodimer. Pyridoxal 5'-phosphate serves as cofactor.

It is found in the cytoplasm. It carries out the reaction O-phospho-L-serine + 2-oxoglutarate = 3-phosphooxypyruvate + L-glutamate. The enzyme catalyses 4-(phosphooxy)-L-threonine + 2-oxoglutarate = (R)-3-hydroxy-2-oxo-4-phosphooxybutanoate + L-glutamate. It participates in amino-acid biosynthesis; L-serine biosynthesis; L-serine from 3-phospho-D-glycerate: step 2/3. It functions in the pathway cofactor biosynthesis; pyridoxine 5'-phosphate biosynthesis; pyridoxine 5'-phosphate from D-erythrose 4-phosphate: step 3/5. Catalyzes the reversible conversion of 3-phosphohydroxypyruvate to phosphoserine and of 3-hydroxy-2-oxo-4-phosphonooxybutanoate to phosphohydroxythreonine. The sequence is that of Phosphoserine aminotransferase from Campylobacter lari (strain RM2100 / D67 / ATCC BAA-1060).